Consider the following 61-residue polypeptide: Small ribosomal subunit protein uS14 (61 aa).

Cys-24, Cys-27, Cys-40, and Cys-43 together coordinate Zn(2+).

The protein belongs to the universal ribosomal protein uS14 family. Zinc-binding uS14 subfamily. As to quaternary structure, part of the 30S ribosomal subunit. Contacts proteins S3 and S10. Zn(2+) is required as a cofactor.

Binds 16S rRNA, required for the assembly of 30S particles and may also be responsible for determining the conformation of the 16S rRNA at the A site. The protein is Small ribosomal subunit protein uS14 of Campylobacter lari (strain RM2100 / D67 / ATCC BAA-1060).